Reading from the N-terminus, the 449-residue chain is Glucose-6-phosphate isomerase (449 aa).

The Proton donor role is filled by Glu291. Residues His312 and Lys426 contribute to the active site.

This sequence belongs to the GPI family.

Its subcellular location is the cytoplasm. The catalysed reaction is alpha-D-glucose 6-phosphate = beta-D-fructose 6-phosphate. The protein operates within carbohydrate biosynthesis; gluconeogenesis. It functions in the pathway carbohydrate degradation; glycolysis; D-glyceraldehyde 3-phosphate and glycerone phosphate from D-glucose: step 2/4. In terms of biological role, catalyzes the reversible isomerization of glucose-6-phosphate to fructose-6-phosphate. In Streptococcus pyogenes serotype M2 (strain MGAS10270), this protein is Glucose-6-phosphate isomerase.